Reading from the N-terminus, the 109-residue chain is Flagellar hook-basal body complex protein FliE (109 aa).

This sequence belongs to the FliE family.

It localises to the bacterial flagellum basal body. This chain is Flagellar hook-basal body complex protein FliE, found in Pseudomonas paraeruginosa (strain DSM 24068 / PA7) (Pseudomonas aeruginosa (strain PA7)).